A 176-amino-acid chain; its full sequence is Large ribosomal subunit protein uL6 (176 aa).

It belongs to the universal ribosomal protein uL6 family. In terms of assembly, part of the 50S ribosomal subunit.

Functionally, this protein binds to the 23S rRNA, and is important in its secondary structure. It is located near the subunit interface in the base of the L7/L12 stalk, and near the tRNA binding site of the peptidyltransferase center. This is Large ribosomal subunit protein uL6 from Burkholderia lata (strain ATCC 17760 / DSM 23089 / LMG 22485 / NCIMB 9086 / R18194 / 383).